The following is a 179-amino-acid chain: ATP synthase subunit delta (179 aa).

This sequence belongs to the ATPase delta chain family. As to quaternary structure, F-type ATPases have 2 components, F(1) - the catalytic core - and F(0) - the membrane proton channel. F(1) has five subunits: alpha(3), beta(3), gamma(1), delta(1), epsilon(1). F(0) has three main subunits: a(1), b(2) and c(10-14). The alpha and beta chains form an alternating ring which encloses part of the gamma chain. F(1) is attached to F(0) by a central stalk formed by the gamma and epsilon chains, while a peripheral stalk is formed by the delta and b chains.

It is found in the cell membrane. Its function is as follows. F(1)F(0) ATP synthase produces ATP from ADP in the presence of a proton or sodium gradient. F-type ATPases consist of two structural domains, F(1) containing the extramembraneous catalytic core and F(0) containing the membrane proton channel, linked together by a central stalk and a peripheral stalk. During catalysis, ATP synthesis in the catalytic domain of F(1) is coupled via a rotary mechanism of the central stalk subunits to proton translocation. Functionally, this protein is part of the stalk that links CF(0) to CF(1). It either transmits conformational changes from CF(0) to CF(1) or is implicated in proton conduction. This Listeria monocytogenes serovar 1/2a (strain ATCC BAA-679 / EGD-e) protein is ATP synthase subunit delta.